Consider the following 165-residue polypeptide: 6,7-dimethyl-8-ribityllumazine synthase (165 aa).

5-amino-6-(D-ribitylamino)uracil-binding positions include Phe22, 56-58, and 80-82; these read SME and AVI. 85 to 86 serves as a coordination point for (2S)-2-hydroxy-3-oxobutyl phosphate; that stretch reads ET. His88 functions as the Proton donor in the catalytic mechanism. Phe113 is a 5-amino-6-(D-ribitylamino)uracil binding site. Residue Arg127 participates in (2S)-2-hydroxy-3-oxobutyl phosphate binding.

This sequence belongs to the DMRL synthase family.

The catalysed reaction is (2S)-2-hydroxy-3-oxobutyl phosphate + 5-amino-6-(D-ribitylamino)uracil = 6,7-dimethyl-8-(1-D-ribityl)lumazine + phosphate + 2 H2O + H(+). Its pathway is cofactor biosynthesis; riboflavin biosynthesis; riboflavin from 2-hydroxy-3-oxobutyl phosphate and 5-amino-6-(D-ribitylamino)uracil: step 1/2. In terms of biological role, catalyzes the formation of 6,7-dimethyl-8-ribityllumazine by condensation of 5-amino-6-(D-ribitylamino)uracil with 3,4-dihydroxy-2-butanone 4-phosphate. This is the penultimate step in the biosynthesis of riboflavin. This Thermotoga petrophila (strain ATCC BAA-488 / DSM 13995 / JCM 10881 / RKU-1) protein is 6,7-dimethyl-8-ribityllumazine synthase.